The chain runs to 140 residues: Putative pre-16S rRNA nuclease (140 aa).

This sequence belongs to the YqgF nuclease family.

Its subcellular location is the cytoplasm. In terms of biological role, could be a nuclease involved in processing of the 5'-end of pre-16S rRNA. The protein is Putative pre-16S rRNA nuclease of Edwardsiella ictaluri (strain 93-146).